The sequence spans 271 residues: Elongation factor Ts (271 aa).

The interval 76–79 (TDFV) is involved in Mg(2+) ion dislocation from EF-Tu.

The protein belongs to the EF-Ts family.

The protein localises to the cytoplasm. Associates with the EF-Tu.GDP complex and induces the exchange of GDP to GTP. It remains bound to the aminoacyl-tRNA.EF-Tu.GTP complex up to the GTP hydrolysis stage on the ribosome. This Mycolicibacterium vanbaalenii (strain DSM 7251 / JCM 13017 / BCRC 16820 / KCTC 9966 / NRRL B-24157 / PYR-1) (Mycobacterium vanbaalenii) protein is Elongation factor Ts.